The chain runs to 127 residues: Small ribosomal subunit protein uS11 (127 aa).

Belongs to the universal ribosomal protein uS11 family. In terms of assembly, part of the 30S ribosomal subunit. Interacts with proteins S7 and S18. Binds to IF-3.

Located on the platform of the 30S subunit, it bridges several disparate RNA helices of the 16S rRNA. Forms part of the Shine-Dalgarno cleft in the 70S ribosome. This is Small ribosomal subunit protein uS11 from Streptococcus gordonii (strain Challis / ATCC 35105 / BCRC 15272 / CH1 / DL1 / V288).